The sequence spans 39 residues: Photosystem II reaction center protein L (39 aa).

Residues 18–38 (SLYWGLLLIFVLAVLFSNYFF) traverse the membrane as a helical segment.

This sequence belongs to the PsbL family. In terms of assembly, PSII is composed of 1 copy each of membrane proteins PsbA, PsbB, PsbC, PsbD, PsbE, PsbF, PsbH, PsbI, PsbJ, PsbK, PsbL, PsbM, PsbT, PsbX, PsbY, PsbZ, Psb30/Ycf12, at least 3 peripheral proteins of the oxygen-evolving complex and a large number of cofactors. It forms dimeric complexes.

Its subcellular location is the plastid thylakoid membrane. One of the components of the core complex of photosystem II (PSII). PSII is a light-driven water:plastoquinone oxidoreductase that uses light energy to abstract electrons from H(2)O, generating O(2) and a proton gradient subsequently used for ATP formation. It consists of a core antenna complex that captures photons, and an electron transfer chain that converts photonic excitation into a charge separation. This subunit is found at the monomer-monomer interface and is required for correct PSII assembly and/or dimerization. This chain is Photosystem II reaction center protein L, found in Cuscuta gronovii (Common dodder).